Reading from the N-terminus, the 635-residue chain is 1-deoxy-D-xylulose-5-phosphate synthase (635 aa).

Thiamine diphosphate contacts are provided by residues H72 and 113-115 (GHA). Residue D144 coordinates Mg(2+). Thiamine diphosphate-binding positions include 145 to 146 (GA), N174, Y286, and E369. Position 174 (N174) interacts with Mg(2+).

The protein belongs to the transketolase family. DXPS subfamily. In terms of assembly, homodimer. Mg(2+) serves as cofactor. Thiamine diphosphate is required as a cofactor.

It catalyses the reaction D-glyceraldehyde 3-phosphate + pyruvate + H(+) = 1-deoxy-D-xylulose 5-phosphate + CO2. It functions in the pathway metabolic intermediate biosynthesis; 1-deoxy-D-xylulose 5-phosphate biosynthesis; 1-deoxy-D-xylulose 5-phosphate from D-glyceraldehyde 3-phosphate and pyruvate: step 1/1. In terms of biological role, catalyzes the acyloin condensation reaction between C atoms 2 and 3 of pyruvate and glyceraldehyde 3-phosphate to yield 1-deoxy-D-xylulose-5-phosphate (DXP). This chain is 1-deoxy-D-xylulose-5-phosphate synthase, found in Gloeothece citriformis (strain PCC 7424) (Cyanothece sp. (strain PCC 7424)).